The sequence spans 247 residues: 14-3-3-like protein B (247 aa).

This sequence belongs to the 14-3-3 family.

This is 14-3-3-like protein B (GF14B) from Glycine max (Soybean).